A 783-amino-acid polypeptide reads, in one-letter code: Lon protease (783 aa).

The 195-residue stretch at 16–210 folds into the Lon N-terminal domain; it reads LPLLASRGVV…KLLEIIKDEI (195 aa). 361–368 lines the ATP pocket; it reads GAPGVGKT. A Lon proteolytic domain is found at 597-778; the sequence is KDRVGVATGM…DQVLDLILGG (182 aa). Residues serine 684 and lysine 727 contribute to the active site.

Belongs to the peptidase S16 family. Homohexamer. Organized in a ring with a central cavity.

Its subcellular location is the cytoplasm. It carries out the reaction Hydrolysis of proteins in presence of ATP.. Functionally, ATP-dependent serine protease that mediates the selective degradation of mutant and abnormal proteins as well as certain short-lived regulatory proteins. Required for cellular homeostasis and for survival from DNA damage and developmental changes induced by stress. Degrades polypeptides processively to yield small peptide fragments that are 5 to 10 amino acids long. Binds to DNA in a double-stranded, site-specific manner. This chain is Lon protease, found in Halothermothrix orenii (strain H 168 / OCM 544 / DSM 9562).